The chain runs to 406 residues: Argininosuccinate synthase (406 aa).

ATP-binding positions include 13-21 (AYSGGLDTS) and alanine 40. Residues tyrosine 91 and serine 96 each contribute to the L-citrulline site. Glycine 121 contributes to the ATP binding site. L-aspartate is bound by residues threonine 123, asparagine 127, and aspartate 128. L-citrulline is bound at residue asparagine 127. 5 residues coordinate L-citrulline: arginine 131, serine 180, serine 189, glutamate 265, and tyrosine 277.

It belongs to the argininosuccinate synthase family. Type 1 subfamily. Homotetramer.

It localises to the cytoplasm. The enzyme catalyses L-citrulline + L-aspartate + ATP = 2-(N(omega)-L-arginino)succinate + AMP + diphosphate + H(+). It functions in the pathway amino-acid biosynthesis; L-arginine biosynthesis; L-arginine from L-ornithine and carbamoyl phosphate: step 2/3. This is Argininosuccinate synthase from Syntrophotalea carbinolica (strain DSM 2380 / NBRC 103641 / GraBd1) (Pelobacter carbinolicus).